We begin with the raw amino-acid sequence, 111 residues long: Cell division protein FtsL (111 aa).

At 1–26 the chain is on the cytoplasmic side; it reads MAQARTEFSKVAAPRKLEEMYAQRGD. Residues 27-47 traverse the membrane as a helical segment; that stretch reads LFPYLLAVLVLLTLVSVFHVW. At 48-111 the chain is on the periplasmic side; it reads SRVRVVDLNL…PTDQQVVVVK (64 aa). Residues 51-85 adopt a coiled-coil conformation; the sequence is RVVDLNLEVAEVARQLKVAQEEQNRLKLEVASLKT.

This sequence belongs to the FtsL family.

The protein localises to the cell inner membrane. In terms of biological role, essential cell division protein. The chain is Cell division protein FtsL from Geobacter sulfurreducens (strain ATCC 51573 / DSM 12127 / PCA).